The primary structure comprises 221 residues: Casparian strip membrane protein 2 (221 aa).

The disordered stretch occupies residues 1-21 (MEKSEATTIEIGETSRESKGK). The Cytoplasmic portion of the chain corresponds to 1 to 41 (MEKSEATTIEIGETSRESKGKTPLLAEVEQTARTAGSYRRG). The chain crosses the membrane as a helical span at residues 42–62 (VAIFDLILRVSAATSALAATI). The Extracellular segment spans residues 63–89 (TMGTTEQTLPFFTQFFQFQASYDDLPA). A helical transmembrane segment spans residues 90-110 (FTFFVIALSIVTGYLVLSVPF). The Cytoplasmic segment spans residues 111-131 (SVVCIAQPLAAVPRLLLIVCD). A helical transmembrane segment spans residues 132–152 (TLTVTLATAAASSSAAIVYLA). The Extracellular segment spans residues 153–221 (HNGNADANWL…HYWDRRWCEI (69 aa)).

The protein belongs to the Casparian strip membrane proteins (CASP) family. As to quaternary structure, homodimer and heterodimers.

The protein resides in the cell membrane. Functionally, regulates membrane-cell wall junctions and localized cell wall deposition. Required for establishment of the Casparian strip membrane domain (CSD) and the subsequent formation of Casparian strips, a cell wall modification of the root endodermis that determines an apoplastic barrier between the intraorganismal apoplasm and the extraorganismal apoplasm and prevents lateral diffusion. This Erythranthe guttata (Yellow monkey flower) protein is Casparian strip membrane protein 2.